A 47-amino-acid chain; its full sequence is Large ribosomal subunit protein bL33C (47 aa).

Belongs to the bacterial ribosomal protein bL33 family.

This is Large ribosomal subunit protein bL33C from Staphylococcus epidermidis (strain ATCC 35984 / DSM 28319 / BCRC 17069 / CCUG 31568 / BM 3577 / RP62A).